The chain runs to 343 residues: Anthranilate phosphoribosyltransferase (343 aa).

5-phospho-alpha-D-ribose 1-diphosphate is bound by residues Gly-86, 89–90 (GD), Thr-94, 96–99 (NIST), 114–122 (KHGNKSASG), and Ser-126. Residue Gly-86 participates in anthranilate binding. Ser-98 lines the Mg(2+) pocket. Asn-117 provides a ligand contact to anthranilate. Residue Arg-172 participates in anthranilate binding. Asp-231 and Glu-232 together coordinate Mg(2+).

It belongs to the anthranilate phosphoribosyltransferase family. Homodimer. The cofactor is Mg(2+).

The enzyme catalyses N-(5-phospho-beta-D-ribosyl)anthranilate + diphosphate = 5-phospho-alpha-D-ribose 1-diphosphate + anthranilate. The protein operates within amino-acid biosynthesis; L-tryptophan biosynthesis; L-tryptophan from chorismate: step 2/5. Its function is as follows. Catalyzes the transfer of the phosphoribosyl group of 5-phosphorylribose-1-pyrophosphate (PRPP) to anthranilate to yield N-(5'-phosphoribosyl)-anthranilate (PRA). This chain is Anthranilate phosphoribosyltransferase, found in Prochlorococcus marinus subsp. pastoris (strain CCMP1986 / NIES-2087 / MED4).